The sequence spans 65 residues: DNA gyrase inhibitor YacG (65 aa).

Cysteine 10, cysteine 13, cysteine 29, and cysteine 33 together coordinate Zn(2+). The interval 45-65 is disordered; sequence EKAIPGAPDMSDSDGWSEDQY. Over residues 55 to 65 the composition is skewed to acidic residues; sequence SDSDGWSEDQY.

Belongs to the DNA gyrase inhibitor YacG family. In terms of assembly, interacts with GyrB. Requires Zn(2+) as cofactor.

In terms of biological role, inhibits all the catalytic activities of DNA gyrase by preventing its interaction with DNA. Acts by binding directly to the C-terminal domain of GyrB, which probably disrupts DNA binding by the gyrase. In Vibrio cholerae serotype O1 (strain ATCC 39315 / El Tor Inaba N16961), this protein is DNA gyrase inhibitor YacG.